We begin with the raw amino-acid sequence, 259 residues long: Aspartate/glutamate leucyltransferase (259 aa).

Belongs to the R-transferase family. Bpt subfamily.

It is found in the cytoplasm. The enzyme catalyses N-terminal L-glutamyl-[protein] + L-leucyl-tRNA(Leu) = N-terminal L-leucyl-L-glutamyl-[protein] + tRNA(Leu) + H(+). The catalysed reaction is N-terminal L-aspartyl-[protein] + L-leucyl-tRNA(Leu) = N-terminal L-leucyl-L-aspartyl-[protein] + tRNA(Leu) + H(+). Its function is as follows. Functions in the N-end rule pathway of protein degradation where it conjugates Leu from its aminoacyl-tRNA to the N-termini of proteins containing an N-terminal aspartate or glutamate. The polypeptide is Aspartate/glutamate leucyltransferase (Rhizobium meliloti (strain 1021) (Ensifer meliloti)).